Consider the following 353-residue polypeptide: tRNA-splicing endonuclease (353 aa).

Residues tyrosine 289, histidine 300, and lysine 331 contribute to the active site.

This sequence belongs to the tRNA-intron endonuclease family. Archaeal long subfamily. As to quaternary structure, homodimer.

The enzyme catalyses pretRNA = a 3'-half-tRNA molecule with a 5'-OH end + a 5'-half-tRNA molecule with a 2',3'-cyclic phosphate end + an intron with a 2',3'-cyclic phosphate and a 5'-hydroxyl terminus.. In terms of biological role, endonuclease that removes tRNA introns. Cleaves pre-tRNA at the 5'- and 3'-splice sites to release the intron. The products are an intron and two tRNA half-molecules bearing 2',3' cyclic phosphate and 5'-OH termini. Recognizes a pseudosymmetric substrate in which 2 bulged loops of 3 bases are separated by a stem of 4 bp. The polypeptide is tRNA-splicing endonuclease (Methanosarcina mazei (strain ATCC BAA-159 / DSM 3647 / Goe1 / Go1 / JCM 11833 / OCM 88) (Methanosarcina frisia)).